A 202-amino-acid polypeptide reads, in one-letter code: Peptide deformylase (202 aa).

Residues 1-24 form a disordered region; sequence MAGSFAQLAKNAEKKKPSISVSKE. Positions 121 and 163 each coordinate Fe cation. Glu-164 is a catalytic residue. His-167 is a Fe cation binding site.

Belongs to the polypeptide deformylase family. Fe(2+) is required as a cofactor.

The catalysed reaction is N-terminal N-formyl-L-methionyl-[peptide] + H2O = N-terminal L-methionyl-[peptide] + formate. Its function is as follows. Removes the formyl group from the N-terminal Met of newly synthesized proteins. Requires at least a dipeptide for an efficient rate of reaction. N-terminal L-methionine is a prerequisite for activity but the enzyme has broad specificity at other positions. This is Peptide deformylase from Prochlorococcus marinus (strain NATL2A).